The following is a 165-amino-acid chain: ER membrane protein complex subunit 5 (165 aa).

At 1 to 3 the chain is on the cytoplasmic side; that stretch reads MAP. The helical transmembrane segment at 4–22 threads the bilayer; that stretch reads SLWKGLVGIGLFALAHAAF. The Lumenal portion of the chain corresponds to 23 to 77; sequence SAAQHYFPSSGIKWKRKCEFLQSSSFQDKIFRSMYYVYDRSYMRLTEKEDESLPI. A helical transmembrane segment spans residues 78–97; sequence DIVLQTLLAFAVTCYGIVHI. Residues 98-165 are Cytoplasmic-facing; the sequence is AGEFKDMDAT…KLRKLESLRR (68 aa). The residue at position 154 (Ser154) is a Phosphoserine.

Belongs to the membrane magnesium transporter (TC 1.A.67) family. As to quaternary structure, component of the ER membrane protein complex (EMC).

It is found in the endoplasmic reticulum membrane. The protein resides in the golgi apparatus membrane. It localises to the early endosome membrane. Part of the endoplasmic reticulum membrane protein complex (EMC) that enables the energy-independent insertion into endoplasmic reticulum membranes of newly synthesized membrane proteins. Preferentially accommodates proteins with transmembrane domains that are weakly hydrophobic or contain destabilizing features such as charged and aromatic residues. Involved in the cotranslational insertion of multi-pass membrane proteins in which stop-transfer membrane-anchor sequences become ER membrane spanning helices. It is also required for the post-translational insertion of tail-anchored/TA proteins in endoplasmic reticulum membranes. By mediating the proper cotranslational insertion of N-terminal transmembrane domains in an N-exo topology, with translocated N-terminus in the lumen of the ER, controls the topology of multi-pass membrane proteins like the G protein-coupled receptors. By regulating the insertion of various proteins in membranes, it is indirectly involved in many cellular processes. May be involved in Mg(2+) transport. In Bos taurus (Bovine), this protein is ER membrane protein complex subunit 5.